The chain runs to 457 residues: Ribosomal RNA-processing protein 8 (457 aa).

Positions leucine 47–glycine 237 are disordered. Polar residues predominate over residues serine 51–glycine 61. Serine 62, serine 64, and serine 105 each carry phosphoserine. Over residues glycine 129–glutamine 138 the composition is skewed to basic and acidic residues. The segment covering glutamate 139–threonine 183 has biased composition (polar residues). Phosphoserine is present on residues serine 172 and serine 177. Residues leucine 184–phenylalanine 203 are compositionally biased toward basic residues. The S-adenosyl-L-methionine site is built by histidine 282, glycine 317, aspartate 335, aspartate 347, methionine 348, and cysteine 364.

It belongs to the methyltransferase superfamily. RRP8 family. Component of the eNoSC complex, composed of SIRT1, SUV39H1 and RRP8.

The protein resides in the nucleus. The protein localises to the nucleolus. Its function is as follows. Essential component of the eNoSC (energy-dependent nucleolar silencing) complex, a complex that mediates silencing of rDNA in response to intracellular energy status and acts by recruiting histone-modifying enzymes. The eNoSC complex is able to sense the energy status of cell: upon glucose starvation, elevation of NAD(+)/NADP(+) ratio activates SIRT1, leading to histone H3 deacetylation followed by dimethylation of H3 at 'Lys-9' (H3K9me2) by SUV39H1 and the formation of silent chromatin in the rDNA locus. In the complex, RRP8 binds to H3K9me2 and probably acts as a methyltransferase. Its substrates are however unknown. This Mus musculus (Mouse) protein is Ribosomal RNA-processing protein 8 (Rrp8).